A 270-amino-acid chain; its full sequence is 3-phenylpropionate-dihydrodiol/cinnamic acid-dihydrodiol dehydrogenase (270 aa).

An NAD(+)-binding site is contributed by Phe-10–Ala-34. Residue Ser-143 participates in substrate binding. Tyr-156 acts as the Proton acceptor in catalysis.

Belongs to the short-chain dehydrogenases/reductases (SDR) family.

The enzyme catalyses 3-(cis-5,6-dihydroxycyclohexa-1,3-dien-1-yl)propanoate + NAD(+) = 3-(2,3-dihydroxyphenyl)propanoate + NADH + H(+). It catalyses the reaction (2E)-3-(cis-5,6-dihydroxycyclohexa-1,3-dien-1-yl)prop-2-enoate + NAD(+) = (2E)-3-(2,3-dihydroxyphenyl)prop-2-enoate + NADH + H(+). It functions in the pathway aromatic compound metabolism; 3-phenylpropanoate degradation. Functionally, converts 3-phenylpropionate-dihydrodiol (PP-dihydrodiol) and cinnamic acid-dihydrodiol (CI-dihydrodiol) into 3-(2,3-dihydroxylphenyl)propanoic acid (DHPP) and 2,3-dihydroxicinnamic acid (DHCI), respectively. The protein is 3-phenylpropionate-dihydrodiol/cinnamic acid-dihydrodiol dehydrogenase of Escherichia coli O8 (strain IAI1).